The following is a 367-amino-acid chain: Anthranilate phosphoribosyltransferase (367 aa).

Residues methionine 1–alanine 21 are compositionally biased toward low complexity. Residues methionine 1–tryptophan 24 form a disordered region. 5-phospho-alpha-D-ribose 1-diphosphate is bound by residues glycine 104, glycine 107–aspartate 108, threonine 112, asparagine 114–threonine 117, lysine 132–serine 140, and glycine 144. Glycine 104 contributes to the anthranilate binding site. Mg(2+) is bound at residue serine 116. Position 135 (asparagine 135) interacts with anthranilate. Anthranilate is bound at residue arginine 190. Mg(2+) contacts are provided by aspartate 248 and glutamate 249.

The protein belongs to the anthranilate phosphoribosyltransferase family. Homodimer. It depends on Mg(2+) as a cofactor.

The enzyme catalyses N-(5-phospho-beta-D-ribosyl)anthranilate + diphosphate = 5-phospho-alpha-D-ribose 1-diphosphate + anthranilate. The protein operates within amino-acid biosynthesis; L-tryptophan biosynthesis; L-tryptophan from chorismate: step 2/5. In terms of biological role, catalyzes the transfer of the phosphoribosyl group of 5-phosphorylribose-1-pyrophosphate (PRPP) to anthranilate to yield N-(5'-phosphoribosyl)-anthranilate (PRA). This chain is Anthranilate phosphoribosyltransferase, found in Mycolicibacterium paratuberculosis (strain ATCC BAA-968 / K-10) (Mycobacterium paratuberculosis).